The primary structure comprises 89 residues: MAVADIKTAKIVKENARSANDTGSPEVQVSLLTARINELTPHFKANTKDHHSRCGLLKMVSRRRRLLDYLKGKDLDCYRALIEKLGLRK.

The protein belongs to the universal ribosomal protein uS15 family. Part of the 30S ribosomal subunit. Forms a bridge to the 50S subunit in the 70S ribosome, contacting the 23S rRNA.

One of the primary rRNA binding proteins, it binds directly to 16S rRNA where it helps nucleate assembly of the platform of the 30S subunit by binding and bridging several RNA helices of the 16S rRNA. Its function is as follows. Forms an intersubunit bridge (bridge B4) with the 23S rRNA of the 50S subunit in the ribosome. The chain is Small ribosomal subunit protein uS15 from Polynucleobacter necessarius subsp. necessarius (strain STIR1).